The following is a 598-amino-acid chain: UvrABC system protein C (598 aa).

In terms of domain architecture, GIY-YIG spans 13-91 (TLPGVYRMVD…IKGLKPRFNI (79 aa)). The UVR domain maps to 200-235 (TALTEEITAQMNAAAENLDFETAAYLRDRLRMLATV).

It belongs to the UvrC family. In terms of assembly, interacts with UvrB in an incision complex.

The protein localises to the cytoplasm. In terms of biological role, the UvrABC repair system catalyzes the recognition and processing of DNA lesions. UvrC both incises the 5' and 3' sides of the lesion. The N-terminal half is responsible for the 3' incision and the C-terminal half is responsible for the 5' incision. The polypeptide is UvrABC system protein C (Thiobacillus denitrificans (strain ATCC 25259 / T1)).